Consider the following 306-residue polypeptide: Methionyl-tRNA formyltransferase (306 aa).

109 to 112 is a (6S)-5,6,7,8-tetrahydrofolate binding site; the sequence is SILP.

The protein belongs to the Fmt family.

The enzyme catalyses L-methionyl-tRNA(fMet) + (6R)-10-formyltetrahydrofolate = N-formyl-L-methionyl-tRNA(fMet) + (6S)-5,6,7,8-tetrahydrofolate + H(+). In terms of biological role, attaches a formyl group to the free amino group of methionyl-tRNA(fMet). The formyl group appears to play a dual role in the initiator identity of N-formylmethionyl-tRNA by promoting its recognition by IF2 and preventing the misappropriation of this tRNA by the elongation apparatus. This chain is Methionyl-tRNA formyltransferase, found in Herpetosiphon aurantiacus (strain ATCC 23779 / DSM 785 / 114-95).